Consider the following 124-residue polypeptide: Orexigenic neuropeptide QRFP (124 aa).

Residues 1–17 form the signal peptide; that stretch reads MRGFRPLLSLLLPLSAC. A propeptide spanning residues 18–79 is cleaved from the precursor; the sequence is FPLLDRRGPT…REHTGFRLGR (62 aa). Residues 63–101 are disordered; that stretch reads REQQASHREHTGFRLGRQDGSSEAAGFLPADSEKASGPL. At phenylalanine 122 the chain carries Phenylalanine amide.

It belongs to the RFamide neuropeptide family. Ligand for the G-protein coupled receptor QRFPR/GPR103. Expressed in the brain with highest levels in the periventricular hypothalamic nucleus and lateral hypothalamic areas. Expressed at moderate levels in the adrenal gland, eye, heart, intestine, liver, lung, kidney, mesenteric lymph node, ovary, placenta, Peyer patches, skin, spleen, stomach, testis, thymus and uterus.

Its subcellular location is the secreted. Its function is as follows. Stimulates feeding and grooming behavior, metabolic rate and locomotor activity and increases blood pressure. May have orexigenic activity. May promote aldosterone secretion by the adrenal gland. The protein is Orexigenic neuropeptide QRFP of Mus musculus (Mouse).